The primary structure comprises 446 residues: Adenylosuccinate synthetase (446 aa).

GTP-binding positions include glycine 12 to lysine 18 and glycine 40 to threonine 42. Aspartate 13 functions as the Proton acceptor in the catalytic mechanism. 2 residues coordinate Mg(2+): aspartate 13 and glycine 40. Residues aspartate 13–lysine 16, asparagine 38–histidine 41, threonine 128, arginine 142, glutamine 223, threonine 238, and arginine 302 each bind IMP. The Proton donor role is filled by histidine 41. Residue threonine 298–arginine 304 coordinates substrate. GTP is bound by residues arginine 304, lysine 330–aspartate 332, and serine 412–glycine 414.

This sequence belongs to the adenylosuccinate synthetase family. Homodimer. Mg(2+) is required as a cofactor.

The protein resides in the cytoplasm. It catalyses the reaction IMP + L-aspartate + GTP = N(6)-(1,2-dicarboxyethyl)-AMP + GDP + phosphate + 2 H(+). Its pathway is purine metabolism; AMP biosynthesis via de novo pathway; AMP from IMP: step 1/2. Its function is as follows. Plays an important role in the de novo pathway of purine nucleotide biosynthesis. Catalyzes the first committed step in the biosynthesis of AMP from IMP. This is Adenylosuccinate synthetase from Acaryochloris marina (strain MBIC 11017).